A 435-amino-acid chain; its full sequence is Glutamate-1-semialdehyde 2,1-aminomutase (435 aa).

Position 266 is an N6-(pyridoxal phosphate)lysine (Lys-266).

This sequence belongs to the class-III pyridoxal-phosphate-dependent aminotransferase family. HemL subfamily. As to quaternary structure, homodimer. Pyridoxal 5'-phosphate is required as a cofactor.

Its subcellular location is the cytoplasm. It catalyses the reaction (S)-4-amino-5-oxopentanoate = 5-aminolevulinate. It participates in porphyrin-containing compound metabolism; protoporphyrin-IX biosynthesis; 5-aminolevulinate from L-glutamyl-tRNA(Glu): step 2/2. This chain is Glutamate-1-semialdehyde 2,1-aminomutase, found in Helicobacter hepaticus (strain ATCC 51449 / 3B1).